Consider the following 286-residue polypeptide: Single myb histone 5 (286 aa).

One can recognise an HTH myb-type domain in the interval 1-61 (MGAPKQRWTS…KWRNMNVIVT (61 aa)). A DNA-binding region (H-T-H motif) is located at residues 28–57 (WRMILNDPELSSTLRYRSNVDLKDKWRNMN). Residues 122–190 (SHSRLDNIIM…KVNRKYRIAP (69 aa)) form the H15 domain. Residues 229–277 (EAAAAAAAHAVAEAEAIMAEAEAAAREAEAAEAEARAAQAFAEAAVLTL) adopt a coiled-coil conformation.

The protein belongs to the histone H1/H5 family. SMH subfamily. In terms of assembly, forms a homodimer and heterodimers.

Its subcellular location is the nucleus. The protein resides in the chromosome. It is found in the nucleolus. It localises to the telomere. Its function is as follows. Binds preferentially double-stranded telomeric repeats, but may also bind to the single telomeric strand. The chain is Single myb histone 5 (SMH5) from Zea mays (Maize).